Here is a 59-residue protein sequence, read N- to C-terminus: Small ribosomal subunit protein bS21 (59 aa).

Positions 35 to 59 (REHYEKPSVKKKKKSEAAKRKKRNF) are disordered. Basic residues predominate over residues 43–59 (VKKKKKSEAAKRKKRNF).

This sequence belongs to the bacterial ribosomal protein bS21 family.

The protein is Small ribosomal subunit protein bS21 of Finegoldia magna (strain ATCC 29328 / DSM 20472 / WAL 2508) (Peptostreptococcus magnus).